Reading from the N-terminus, the 273-residue chain is NH(3)-dependent NAD(+) synthetase (273 aa).

Residue 46 to 53 (GISGGQDS) coordinates ATP. Asp52 provides a ligand contact to Mg(2+). Arg139 contacts deamido-NAD(+). Thr159 serves as a coordination point for ATP. Position 164 (Glu164) interacts with Mg(2+). The deamido-NAD(+) site is built by Lys172 and Asp179. Residues Lys188 and Thr210 each coordinate ATP. A deamido-NAD(+)-binding site is contributed by 259–260 (HK).

It belongs to the NAD synthetase family. As to quaternary structure, homodimer.

It catalyses the reaction deamido-NAD(+) + NH4(+) + ATP = AMP + diphosphate + NAD(+) + H(+). It functions in the pathway cofactor biosynthesis; NAD(+) biosynthesis; NAD(+) from deamido-NAD(+) (ammonia route): step 1/1. In terms of biological role, catalyzes the ATP-dependent amidation of deamido-NAD to form NAD. Uses ammonia as a nitrogen source. The sequence is that of NH(3)-dependent NAD(+) synthetase from Streptococcus agalactiae serotype Ia (strain ATCC 27591 / A909 / CDC SS700).